Reading from the N-terminus, the 353-residue chain is Polyadenylate-binding protein-interacting protein 10 (353 aa).

A disordered region spans residues 1 to 61 (MAVAENAGVK…IDSTPETDDR (61 aa)). Low complexity predominate over residues 20-31 (NNNTAASATETT). The PAM2-like signature appears at 96–106 (KLNPMAQEFVP). The tract at residues 128–159 (AAPPKLADGNDHFPRRRRSFGQGKRRMNKRTS) is disordered. Basic residues predominate over residues 141 to 156 (PRRRRSFGQGKRRMNK). The Bipartite nuclear localization signal signature appears at 142-153 (RRRRSFGQGKRR). 2 consecutive RRM domains span residues 169-244 (RTVY…PSKT) and 266-341 (RTVY…PSKT).

Expressed in cauline leaves, stems, rosette leaves, immature siliques and primary inflorescences.

The protein resides in the nucleus. The polypeptide is Polyadenylate-binding protein-interacting protein 10 (CID10) (Arabidopsis thaliana (Mouse-ear cress)).